Here is a 231-residue protein sequence, read N- to C-terminus: Enolase-phosphatase E1 (231 aa).

2 residues coordinate Mg(2+): D11 and E13. Substrate-binding positions include 125–126 (SS) and K162. D188 contacts Mg(2+).

The protein belongs to the HAD-like hydrolase superfamily. MasA/MtnC family. As to quaternary structure, monomer. The cofactor is Mg(2+).

Its subcellular location is the cytoplasm. It localises to the nucleus. The enzyme catalyses 5-methylsulfanyl-2,3-dioxopentyl phosphate + H2O = 1,2-dihydroxy-5-(methylsulfanyl)pent-1-en-3-one + phosphate. It participates in amino-acid biosynthesis; L-methionine biosynthesis via salvage pathway; L-methionine from S-methyl-5-thio-alpha-D-ribose 1-phosphate: step 3/6. The protein operates within amino-acid biosynthesis; L-methionine biosynthesis via salvage pathway; L-methionine from S-methyl-5-thio-alpha-D-ribose 1-phosphate: step 4/6. Bifunctional enzyme that catalyzes the enolization of 2,3-diketo-5-methylthiopentyl-1-phosphate (DK-MTP-1-P) into the intermediate 2-hydroxy-3-keto-5-methylthiopentenyl-1-phosphate (HK-MTPenyl-1-P), which is then dephosphorylated to form the acireductone 1,2-dihydroxy-3-keto-5-methylthiopentene (DHK-MTPene). This Pyricularia oryzae (strain 70-15 / ATCC MYA-4617 / FGSC 8958) (Rice blast fungus) protein is Enolase-phosphatase E1.